A 491-amino-acid polypeptide reads, in one-letter code: UDP-N-acetylmuramate--L-alanine ligase (491 aa).

Position 126–132 (126–132) interacts with ATP; that stretch reads GTHGKTT.

The protein belongs to the MurCDEF family.

It is found in the cytoplasm. The enzyme catalyses UDP-N-acetyl-alpha-D-muramate + L-alanine + ATP = UDP-N-acetyl-alpha-D-muramoyl-L-alanine + ADP + phosphate + H(+). Its pathway is cell wall biogenesis; peptidoglycan biosynthesis. In terms of biological role, cell wall formation. In Shigella flexneri serotype 5b (strain 8401), this protein is UDP-N-acetylmuramate--L-alanine ligase.